Reading from the N-terminus, the 615-residue chain is Aspartokinase (615 aa).

Disordered regions lie at residues 84–105 and 127–171; these read ALQP…GTAT and SSVS…SISQ. Composition is skewed to low complexity over residues 90 to 102 and 127 to 164; these read SSSG…SMSG and SSVS…ATPS. The ACT domain maps to 467-537; sequence IHSNRKTLSH…EVTVSKDMAI (71 aa).

It belongs to the aspartokinase family.

The enzyme catalyses L-aspartate + ATP = 4-phospho-L-aspartate + ADP. Its pathway is amino-acid biosynthesis; L-methionine biosynthesis via de novo pathway; L-homoserine from L-aspartate: step 1/3. The protein operates within amino-acid biosynthesis; L-threonine biosynthesis; L-threonine from L-aspartate: step 1/5. Phosphorylates aspartate, the first step in the biosynthesis of amino acids that derive from aspartate (the aspartate family of amino acids), including methioinine and threonine, the latter of which is a precursor to isoleucine. This is Aspartokinase from Cryptococcus neoformans var. grubii serotype A (strain H99 / ATCC 208821 / CBS 10515 / FGSC 9487) (Filobasidiella neoformans var. grubii).